The chain runs to 453 residues: Fibrinogen gamma chain (453 aa).

The signal sequence occupies residues 1–26 (MSWSLHPRNLILYFYALLFLSSTCVA). At S68 the chain carries Phosphoserine; by FAM20C. Residue N78 is glycosylated (N-linked (GlcNAc...) (complex) asparagine). The Fibrinogen C-terminal domain maps to 170–416 (QIHDITGKDC…KTTMKIIPFN (247 aa)). C179 and C208 are joined by a disulfide. N-linked (GlcNAc...) asparagine; in variant Asahi glycosylation is present at N334. 4 residues coordinate Ca(2+): D344, D346, F348, and G350. A disulfide bond links C352 and C365. Residues 400–422 (TRWYSMKKTTMKIIPFNRLTIGE) are gamma-chain polymerization, binding amino end of another fibrin alpha chain. The platelet aggregation and Staphylococcus clumping stretch occupies residues 423–437 (GQQHHLGGAKQVRPE). Residue Q424 forms an Isoglutamyl lysine isopeptide (Gln-Lys) (interchain with K-432) linkage. Residues 424 to 453 (QQHHLGGAKQVRPEHPAETEYDSLYPEDDL) form a disordered region. K432 participates in a covalent cross-link: Isoglutamyl lysine isopeptide (Lys-Gln) (interchain with Q-424). The span at 442–453 (TEYDSLYPEDDL) shows a compositional bias: acidic residues. Residues Y444 and Y448 each carry the sulfotyrosine modification.

In terms of assembly, heterohexamer; disulfide linked. Contains 2 sets of 3 non-identical chains (alpha, beta and gamma). The 2 heterotrimers are in head to head conformation with the N-termini in a small central domain. In terms of processing, conversion of fibrinogen to fibrin is triggered by thrombin, which cleaves fibrinopeptides A and B from alpha and beta chains, and thus exposes the N-terminal polymerization sites responsible for the formation of the soft clot. The soft clot is converted into the hard clot by factor XIIIA which catalyzes the epsilon-(gamma-glutamyl)lysine cross-linking between gamma chains (stronger) and between alpha chains (weaker) of different monomers. Post-translationally, sulfation of C-terminal tyrosines increases affinity for thrombin. As to expression, detected in blood plasma (at protein level).

The protein resides in the secreted. Its function is as follows. Together with fibrinogen alpha (FGA) and fibrinogen beta (FGB), polymerizes to form an insoluble fibrin matrix. Has a major function in hemostasis as one of the primary components of blood clots. In addition, functions during the early stages of wound repair to stabilize the lesion and guide cell migration during re-epithelialization. Was originally thought to be essential for platelet aggregation, based on in vitro studies using anticoagulated blood. However, subsequent studies have shown that it is not absolutely required for thrombus formation in vivo. Enhances expression of SELP in activated platelets via an ITGB3-dependent pathway. Maternal fibrinogen is essential for successful pregnancy. Fibrin deposition is also associated with infection, where it protects against IFNG-mediated hemorrhage. May also facilitate the antibacterial immune response via both innate and T-cell mediated pathways. The polypeptide is Fibrinogen gamma chain (FGG) (Homo sapiens (Human)).